The primary structure comprises 367 residues: tRNA N6-adenosine threonylcarbamoyltransferase (367 aa).

Fe cation is bound by residues His-123 and His-127. Residues 145 to 149 (LVSGG), Asp-178, Gly-191, and Asn-288 each bind substrate. Residue Asp-316 coordinates Fe cation.

It belongs to the KAE1 / TsaD family. It depends on Fe(2+) as a cofactor.

The protein localises to the cytoplasm. It carries out the reaction L-threonylcarbamoyladenylate + adenosine(37) in tRNA = N(6)-L-threonylcarbamoyladenosine(37) in tRNA + AMP + H(+). Required for the formation of a threonylcarbamoyl group on adenosine at position 37 (t(6)A37) in tRNAs that read codons beginning with adenine. Is involved in the transfer of the threonylcarbamoyl moiety of threonylcarbamoyl-AMP (TC-AMP) to the N6 group of A37, together with TsaE and TsaB. TsaD likely plays a direct catalytic role in this reaction. In Caulobacter vibrioides (strain ATCC 19089 / CIP 103742 / CB 15) (Caulobacter crescentus), this protein is tRNA N6-adenosine threonylcarbamoyltransferase.